The sequence spans 496 residues: Acetyltransferase adrJ (496 aa).

Residues histidine 174 and aspartate 421 each act as proton acceptor in the active site.

This sequence belongs to the plant acyltransferase family. In terms of assembly, monomer.

The protein operates within secondary metabolite biosynthesis; terpenoid biosynthesis. Acetyltransferase; part of the gene cluster that mediates the biosynthesis of andrastins, meroterpenoid compounds that exhibit inhibitory activity against ras farnesyltransferase, suggesting that they could be promising leads for antitumor agents. The first step of the pathway is the synthesis of 3,5-dimethylorsellinic acid (DMOA) by the polyketide synthase adrD via condensation of one acetyl-CoA starter unit with 3 malonyl-CoA units and 2 methylations. DMAO is then converted to farnesyl-DMAO by the prenyltransferase adrG. The methyltransferase adrK catalyzes the methylation of the carboxyl group of farnesyl-DMAO to farnesyl-DMAO methyl ester which is further converted to epoxyfarnesyl-DMAO methyl ester by the FAD-dependent monooxygenase adrH. The terpene cyclase adrI then catalyzes the carbon skeletal rearrangement to generate the andrastin E, the first compound in the pathway having the andrastin scaffold, with the tetracyclic ring system. The post-cyclization tailoring enzymes adrF, adrE, adrJ, and adrA, are involved in the conversion of andrastin E into andrastin A. The short chain dehydrogenase adrF is responsible for the oxidation of the C-3 a hydroxyl group of andrastin E to yield the corresponding ketone, andrastin D. The ketoreductase adrE stereoselectively reduces the carbonyl moiety to reverse the stereochemistry of the C-3 position to yield andrastin F. The acetyltransferase adrJ is the acetyltransferase that attaches the acetyl group to the C-3 hydroxyl group of andrastin F to yield andrastin C. Finally, the cytochrome P450 monooxygenase adrA catalyzes two sequential oxidation reactions of the C-23 methyl group, to generate the corresponding alcohol andrastin B, and aldehyde andrastin A. The chain is Acetyltransferase adrJ from Penicillium roqueforti.